The chain runs to 222 residues: Translation initiation factor 6 (222 aa).

It belongs to the eIF-6 family.

In terms of biological role, binds to the 50S ribosomal subunit and prevents its association with the 30S ribosomal subunit to form the 70S initiation complex. This Methanothermobacter thermautotrophicus (strain ATCC 29096 / DSM 1053 / JCM 10044 / NBRC 100330 / Delta H) (Methanobacterium thermoautotrophicum) protein is Translation initiation factor 6.